The chain runs to 232 residues: 2,3,4,5-tetrahydropyridine-2,6-dicarboxylate N-acetyltransferase (232 aa).

The protein belongs to the transferase hexapeptide repeat family. DapH subfamily.

It carries out the reaction (S)-2,3,4,5-tetrahydrodipicolinate + acetyl-CoA + H2O = L-2-acetamido-6-oxoheptanedioate + CoA. It participates in amino-acid biosynthesis; L-lysine biosynthesis via DAP pathway; LL-2,6-diaminopimelate from (S)-tetrahydrodipicolinate (acetylase route): step 1/3. Catalyzes the transfer of an acetyl group from acetyl-CoA to tetrahydrodipicolinate. The chain is 2,3,4,5-tetrahydropyridine-2,6-dicarboxylate N-acetyltransferase from Streptococcus pneumoniae (strain Taiwan19F-14).